The sequence spans 201 residues: uncharacterized protein (201 aa).

Belongs to the mimivirus L885/R898 family.

This is an uncharacterized protein from Acanthamoeba polyphaga (Amoeba).